Here is a 176-residue protein sequence, read N- to C-terminus: Putative Ras-related protein RABA4e (176 aa).

It belongs to the small GTPase superfamily. Rab family.

The polypeptide is Putative Ras-related protein RABA4e (RABA4E) (Arabidopsis thaliana (Mouse-ear cress)).